The primary structure comprises 188 residues: Molybdopterin synthase catalytic subunit (188 aa).

Positions 1 to 14 (MTTQPPQDQTSTTP) are enriched in low complexity. Positions 1-23 (MTTQPPQDQTSTTPSLPPHLDPT) are disordered. Substrate-binding positions include 134–135 (HR), Lys-150, and 157–159 (KRE).

Belongs to the MoaE family. MOCS2B subfamily. In terms of assembly, heterotetramer; composed of 2 small (MOCS2A) and 2 large (MOCS2B) subunits.

The protein resides in the cytoplasm. The enzyme catalyses 2 [molybdopterin-synthase sulfur-carrier protein]-C-terminal-Gly-aminoethanethioate + cyclic pyranopterin phosphate + H2O = molybdopterin + 2 [molybdopterin-synthase sulfur-carrier protein]-C-terminal Gly-Gly + 2 H(+). It functions in the pathway cofactor biosynthesis; molybdopterin biosynthesis. In terms of biological role, catalytic subunit of the molybdopterin synthase complex, a complex that catalyzes the conversion of precursor Z into molybdopterin. Acts by mediating the incorporation of 2 sulfur atoms from thiocarboxylated MOCS2A into precursor Z to generate a dithiolene group. In Neosartorya fischeri (strain ATCC 1020 / DSM 3700 / CBS 544.65 / FGSC A1164 / JCM 1740 / NRRL 181 / WB 181) (Aspergillus fischerianus), this protein is Molybdopterin synthase catalytic subunit.